Consider the following 131-residue polypeptide: Large ribosomal subunit protein bL17 (131 aa).

It belongs to the bacterial ribosomal protein bL17 family. In terms of assembly, part of the 50S ribosomal subunit. Contacts protein L32.

In Bordetella parapertussis (strain 12822 / ATCC BAA-587 / NCTC 13253), this protein is Large ribosomal subunit protein bL17.